The primary structure comprises 1361 residues: DNA-directed RNA polymerase subunit beta'' (1361 aa).

Zn(2+) is bound by residues C224, C295, C302, and C305.

The protein belongs to the RNA polymerase beta' chain family. RpoC2 subfamily. In plastids the minimal PEP RNA polymerase catalytic core is composed of four subunits: alpha, beta, beta', and beta''. When a (nuclear-encoded) sigma factor is associated with the core the holoenzyme is formed, which can initiate transcription. Zn(2+) is required as a cofactor.

Its subcellular location is the plastid. The protein localises to the chloroplast. It carries out the reaction RNA(n) + a ribonucleoside 5'-triphosphate = RNA(n+1) + diphosphate. Functionally, DNA-dependent RNA polymerase catalyzes the transcription of DNA into RNA using the four ribonucleoside triphosphates as substrates. This chain is DNA-directed RNA polymerase subunit beta'', found in Spinacia oleracea (Spinach).